The chain runs to 776 residues: Homoaconitase, mitochondrial (776 aa).

A mitochondrion-targeting transit peptide spans 1 to 24 (MVALRRAVALNAVAIARLQTRALT). Residues cysteine 392, cysteine 459, and cysteine 462 each coordinate [4Fe-4S] cluster.

It belongs to the aconitase/IPM isomerase family. The cofactor is [4Fe-4S] cluster.

It is found in the mitochondrion. It carries out the reaction (2R,3S)-homoisocitrate = cis-homoaconitate + H2O. Its pathway is amino-acid biosynthesis; L-lysine biosynthesis via AAA pathway; L-alpha-aminoadipate from 2-oxoglutarate: step 3/5. Catalyzes the reversible hydration of cis-homoaconitate to (2R,3S)-homoisocitrate, a step in the alpha-aminoadipate pathway for lysine biosynthesis. This chain is Homoaconitase, mitochondrial (LYS4), found in Gibberella zeae (strain ATCC MYA-4620 / CBS 123657 / FGSC 9075 / NRRL 31084 / PH-1) (Wheat head blight fungus).